The primary structure comprises 497 residues: Argininosuccinate lyase (497 aa).

Belongs to the lyase 1 family. Argininosuccinate lyase subfamily.

It localises to the cytoplasm. The enzyme catalyses 2-(N(omega)-L-arginino)succinate = fumarate + L-arginine. Its pathway is amino-acid biosynthesis; L-arginine biosynthesis; L-arginine from L-ornithine and carbamoyl phosphate: step 3/3. The protein is Argininosuccinate lyase of Clavibacter michiganensis subsp. michiganensis (strain NCPPB 382).